We begin with the raw amino-acid sequence, 211 residues long: uncharacterized protein (211 aa).

The protein belongs to the nucleoside deoxyribosyltransferase family.

Its subcellular location is the cytoplasm. The protein localises to the nucleus. This is an uncharacterized protein from Schizosaccharomyces pombe (strain 972 / ATCC 24843) (Fission yeast).